We begin with the raw amino-acid sequence, 347 residues long: MAAIGGDGRMPMGVAIEVKGLTKSFGSSRIWEDVTLDIPAGEVSVLLGPSGTGKSVFLKSLIGLLRPERGSILIDGTDIIECSAKELYEIRTLFGVLFQDGALFGSMNLYDNTAFPLREHTKKKESEIRDIVMEKLQLVGLGGDEKKFPGEISGGMRKRAGLARALVLDPQIILCDEPDSGLDPVRTAYLSQLIMDINAQIDATILIVTHNVNIARTVPDNMGMLFRKHLVMFGPREVLLTSDEPVVRQFLNGRRIGPIGMSEEKDESTMAEEAALLEAGHYAGGAEEVEGVPPQITVTPGMPKRKAVARRQARVRAMLPTLPKGAQAAILDDLEGAHNYQAHEFGD.

An ABC transporter domain is found at 16–252; sequence IEVKGLTKSF…DEPVVRQFLN (237 aa). 48–55 provides a ligand contact to ATP; that stretch reads GPSGTGKS.

The protein belongs to the ABC transporter superfamily.

Not known, could be involved in the transport of ribonucleotides. This is Probable ribonucleotide transport ATP-binding protein mkl (mkl) from Mycobacterium leprae (strain TN).